A 345-amino-acid chain; its full sequence is Acyl-CoA--sterol O-acyltransferase 1 (345 aa).

A run of 9 helical transmembrane segments spans residues 1-21 (MASF…TFFI), 32-52 (LILF…IYSL), 54-74 (LLGI…LLFA), 86-106 (PLSL…QLSP), 120-140 (GPLI…AYEY), 148-168 (VVLT…LAAT), 231-251 (ILAA…IFFY), 258-278 (DWKM…EIAI), and 291-311 (AISQ…LFLP).

This sequence belongs to the wax synthase family.

Its subcellular location is the membrane. Functionally, involved in the esterification of cycloartenol. Not implicated in the formation of sterol esters in flowers or during seed maturation. Has a substrate preference toward saturated fatty acyl donors (16:0 &gt; 18:0 &gt; 16:1 &gt; 18:1). Does not require triacyglycerols (TAGs) as a fatty acyl donor, and is unable to acylate diacylglycerol to produce TAG. The sequence is that of Acyl-CoA--sterol O-acyltransferase 1 (ASAT1) from Arabidopsis thaliana (Mouse-ear cress).